A 408-amino-acid chain; its full sequence is Aminopeptidase T (408 aa).

A divalent metal cation contacts are provided by E250, E316, E340, H345, H376, and D378.

This sequence belongs to the peptidase M29 family. In terms of assembly, homodimer. The cofactor is Co(2+). Requires Zn(2+) as cofactor. Mg(2+) is required as a cofactor.

In terms of biological role, metal-dependent exopeptidase. In Thermus aquaticus, this protein is Aminopeptidase T.